The following is a 294-amino-acid chain: MIRGSIVALVTPMRADGSVDWERLRSLVNWHVEQGTHAIVAVGTTGESATLGFEEHDSVIREVVALAKGRLPVIAGTGANNTEEAIRLTRDAKRDGADACLLVTPYYNKPPQEGLYQHFLAIARAVDIPQILYNVPGRTSCDLLPETVERLSKVPNIVGIKEATGNLERAREIRERCSDDFMLYSGDDATAMDFILAGGHGDISVTANVAPAKMAAMCEAALAGDADTARALNAELEPLHRDLFIEANPIPVKWALFEMGLIDAGIRLPLVPMSEAAQPRLRETMRQCGLLEVK.

Position 45 (Thr45) interacts with pyruvate. Tyr133 serves as the catalytic Proton donor/acceptor. Lys161 (schiff-base intermediate with substrate) is an active-site residue. A pyruvate-binding site is contributed by Ile203.

It belongs to the DapA family. In terms of assembly, homotetramer; dimer of dimers.

The protein localises to the cytoplasm. The enzyme catalyses L-aspartate 4-semialdehyde + pyruvate = (2S,4S)-4-hydroxy-2,3,4,5-tetrahydrodipicolinate + H2O + H(+). Its pathway is amino-acid biosynthesis; L-lysine biosynthesis via DAP pathway; (S)-tetrahydrodipicolinate from L-aspartate: step 3/4. In terms of biological role, catalyzes the condensation of (S)-aspartate-beta-semialdehyde [(S)-ASA] and pyruvate to 4-hydroxy-tetrahydrodipicolinate (HTPA). In Alcanivorax borkumensis (strain ATCC 700651 / DSM 11573 / NCIMB 13689 / SK2), this protein is 4-hydroxy-tetrahydrodipicolinate synthase.